Consider the following 298-residue polypeptide: Tyrosine recombinase XerC (298 aa).

A Core-binding (CB) domain is found at 1 to 84 (MNHIQDAFLN…TLRTFYEYWM (84 aa)). The region spanning 105–286 (YLPQFFYEEE…SNQQLRKVYL (182 aa)) is the Tyr recombinase domain. Residues arginine 145, lysine 169, histidine 238, arginine 241, and histidine 264 contribute to the active site. Residue tyrosine 273 is the O-(3'-phospho-DNA)-tyrosine intermediate of the active site.

This sequence belongs to the 'phage' integrase family. XerC subfamily. Forms a cyclic heterotetrameric complex composed of two molecules of XerC and two molecules of XerD.

It is found in the cytoplasm. Functionally, site-specific tyrosine recombinase, which acts by catalyzing the cutting and rejoining of the recombining DNA molecules. The XerC-XerD complex is essential to convert dimers of the bacterial chromosome into monomers to permit their segregation at cell division. It also contributes to the segregational stability of plasmids. The protein is Tyrosine recombinase XerC of Staphylococcus aureus (strain USA300).